We begin with the raw amino-acid sequence, 207 residues long: Reticulon-1-A (207 aa).

The region spanning 21–207 (AIDLLYWRDI…AKIPGTKQKE (187 aa)) is the Reticulon domain. The next 2 helical transmembrane spans lie at 35-55 (IVFG…VVSV) and 139-159 (VLMW…LLIM).

Expressed in the animal hemisphere (presumptive neural ectoderm) of blastula and gastrula stage embryos, and along the anterior neural border, in the panplacodal primordium, and in the dorsolateral side of archenteron roof of late neurula embryos. At the tailbud stage, expression localizes to the central nervous system, including the spinal cord, prosencephalon, mesencephalon and rhombencephalon, as well as the lateral line placode, otic vesicle and pronephros.

The protein localises to the endoplasmic reticulum membrane. The protein resides in the nucleus. Its function is as follows. Inhibits amyloid precursor protein processing, probably by blocking BACE1 activity. In Xenopus laevis (African clawed frog), this protein is Reticulon-1-A (rtn1-a).